We begin with the raw amino-acid sequence, 416 residues long: MISGLFKLSNKQSVLQNATKLVLQRRTFFNIVPNPSVGLTEDQKQFQSMALDFAQEKMKPFAEKWDKEEYFPRDVMREAAELGFGGIYVREDVGGSGLSRLDASIIIEALASADVSTTAFISIHNMCAGLIDIYGTEEQRKKFLPSLVSMEKIASYCLTEPGSGSDAGSLSTKATKDGDHYILNGSKAFISGGGDSEVYLVMVRTGAEKGPKGISCLLVEKDTPGLSFGKKEEKLGWNTQPTRALIFEDCRVPVGNLIGKEGQGFSIAMNALNGGRINIGACSLGGAQSCLVAARDHVKVRKQFNQPLEHFQAVQFKMADMATKLHASRIMIRNAAAMLDAKDPSAHVYIAMAKLFACDECFKVTDDSLQLFGGYGYLKDYPVERYLRDLRVHRILEGSDAVMRLIISRELSKDDH.

Residues 1 to 21 (MISGLFKLSNKQSVLQNATKL) constitute a mitochondrion transit peptide. Residues 156 to 165 (YCLTEPGSGS) and 189 to 191 (FIS) contribute to the FAD site. S165 contributes to the substrate binding site. 273–276 (NGGR) provides a ligand contact to substrate. Residues R301, 311–312 (FQ), and 370–374 (QLFGG) each bind FAD. The active-site Proton acceptor is the E397. 399–401 (SDA) provides a ligand contact to FAD. A substrate-binding site is contributed by R409.

It belongs to the acyl-CoA dehydrogenase family. Homotetramer. FAD is required as a cofactor.

The protein resides in the mitochondrion. It catalyses the reaction 2-methylpropanoyl-CoA + oxidized [electron-transfer flavoprotein] + H(+) = 2-methylpropenoyl-CoA + reduced [electron-transfer flavoprotein]. The catalysed reaction is (2S)-2-methylbutanoyl-CoA + oxidized [electron-transfer flavoprotein] + H(+) = (2E)-2-methylbut-2-enoyl-CoA + reduced [electron-transfer flavoprotein]. It carries out the reaction propanoyl-CoA + oxidized [electron-transfer flavoprotein] + H(+) = acryloyl-CoA + reduced [electron-transfer flavoprotein]. Its pathway is amino-acid degradation; L-valine degradation. Functionally, isobutyryl-CoA dehydrogenase which catalyzes one of the steps of the valine catabolic pathway. To a lesser extent, is also able to catalyze the oxidation of (2S)-2-methylbutanoyl-CoA. The protein is Isobutyryl-CoA dehydrogenase, mitochondrial (acad8) of Dictyostelium discoideum (Social amoeba).